We begin with the raw amino-acid sequence, 271 residues long: Insulin-like growth factor-binding protein 5 (271 aa).

Positions 1–19 (MVISVVLLLLAACAVPAQG) are cleaved as a signal peptide. An IGFBP N-terminal domain is found at 22–102 (SFVHCEPCDE…LHGRGVCLNE (81 aa)). Cystine bridges form between Cys-26/Cys-52, Cys-29/Cys-54, Cys-37/Cys-55, Cys-44/Cys-58, Cys-66/Cys-79, and Cys-73/Cys-99. A compositionally biased stretch (basic and acidic residues) spans 109 to 121 (TKIERDSREHEEP). The tract at residues 109–129 (TKIERDSREHEEPTTSEMAEE) is disordered. Phosphoserine is present on Ser-115. Positions 188–262 (QGPCRRHMEA…MEYVDGDFQC (75 aa)) constitute a Thyroglobulin type-1 domain. Intrachain disulfides connect Cys-191–Cys-218, Cys-229–Cys-240, and Cys-242–Cys-262.

As to quaternary structure, interacts with IGF1; this interaction enhances the growth stimulatory effects of IGF1 on fibroblasts. Interacts with CAV1; this interaction allows trafficking of IGFBP5 from the plasma membrane to the nucleus. Interacts with NCL; this interaction is necessary for IGFBP5 localization to the nucleus. In terms of tissue distribution, mostly in kidney.

It is found in the secreted. It localises to the cytoplasm. The protein resides in the nucleus. In terms of biological role, multifunctional protein that plays a critical role in regulating the availability of IGFs to their receptors and thereby regulates IGF-mediated cellular processes including proliferation, differentiation, and apoptosis in a cell-type specific manner. Increases the cell proliferation of osteoblasts, intestinal smooth muscle cells and neuroblastoma cells. Enhances adhesion and survival of epithelial cells but decreases adhesion of mesenchymal cells. Once secreted, acts as a major mediator of mTORC1-dependent feedback inhibition of IGF1 signaling. Also plays a role in the induction of extracellular matrix (ECM) production and deposition independently of its nuclear translocation and binding to IGFs. Acts itself as a growth factor that can act independently of IGFs to regulate bone formation. Acts as a ligand for the ROR1 receptor which triggers formation of ROR1/HER2 heterodimer to enhance CREB oncogenic signaling. This Rattus norvegicus (Rat) protein is Insulin-like growth factor-binding protein 5 (Igfbp5).